Consider the following 240-residue polypeptide: MGKTQSLPILITGGGRRIGLALAWHFINQKQPVIVSYRTHYPAIDGLIKAGAQCIQADFSTNDGVMAFADEVLKSTHGLRAILHNASAWMAEKPGAPLTDVLACMMQIHVNTPYLLNHALERLLRGHGHAASDIIHFTDYVVERGSDKHIAYAASKAALDNMTRSFARKLAPEVKVNSIAPSLILFNEHDDAEYRQQALNKSLMKTAPGEKEVIDLVDYLLTSCFVTGRSFPLDGGRHLR.

Tyr152 acts as the Proton acceptor in catalysis.

Belongs to the short-chain dehydrogenases/reductases (SDR) family. FolM subfamily.

The enzyme catalyses (6S)-5,6,7,8-tetrahydrofolate + NADP(+) = 7,8-dihydrofolate + NADPH + H(+). It catalyses the reaction 7,8-dihydromonapterin + NADPH + H(+) = 5,6,7,8-tetrahydromonapterin + NADP(+). Its function is as follows. Catalyzes the reduction of dihydromonapterin to tetrahydromonapterin. Also has lower activity with dihydrofolate. This Escherichia coli O1:K1 / APEC protein is Dihydromonapterin reductase (folM).